The primary structure comprises 212 residues: Acyl-homoserine-lactone synthase (212 aa).

It belongs to the autoinducer synthase family.

The catalysed reaction is a fatty acyl-[ACP] + S-adenosyl-L-methionine = an N-acyl-L-homoserine lactone + S-methyl-5'-thioadenosine + holo-[ACP] + H(+). In terms of biological role, required for the synthesis of OHHL (N-(3-oxohexanoyl)-L-homoserine lactone), an autoinducer molecule which binds to TraR and thus acts in the control of conjugal transfer. This is Acyl-homoserine-lactone synthase (traI) from Rhizobium radiobacter (Agrobacterium tumefaciens).